A 327-amino-acid polypeptide reads, in one-letter code: Vacuolar protein sorting-associated protein 26A (327 aa).

The tract at residues 306–327 (RTNFHQRFESPESQASAEQPEM) is disordered. S315 carries the phosphoserine modification. Positions 316–327 (PESQASAEQPEM) are enriched in polar residues.

It belongs to the VPS26 family. In terms of assembly, component of the heterotrimeric retromer cargo-selective complex (CSC), also described as vacuolar protein sorting subcomplex (VPS), formed by VPS26 (VPS26A or VPS26B), VPS29 and VPS35. The CSC has a highly elongated structure with VPS26 and VPS29 binding independently at opposite distal ends of VPS35 as central platform. The CSC is believed to associate with variable sorting nexins to form functionally distinct retromer complex variants. The originally described retromer complex (also called SNX-BAR retromer) is a pentamer containing the CSC and a heterodimeric membrane-deforming subcomplex formed between SNX1 or SNX2 and SNX5 or SNX6 (also called SNX-BAR subcomplex); the respective CSC and SNX-BAR subcomplexes associate with low affinity. The CSC associates with SNX3 to form a SNX3-retromer complex. The CSC associates with SNX27, the WASH complex and the SNX-BAR subcomplex to form the SNX27-retromer complex. Interacts with VPS29, VPS35, SNX1, SNX2, SNX5, SNX6, SNX3, SNX27, RAB7A, ECPAS, EHD1, WASHC5, SORL1.

The protein resides in the cytoplasm. The protein localises to the endosome membrane. Its subcellular location is the early endosome. Acts as a component of the retromer cargo-selective complex (CSC). The CSC is believed to be the core functional component of retromer or respective retromer complex variants acting to prevent missorting of selected transmembrane cargo proteins into the lysosomal degradation pathway. The recruitment of the CSC to the endosomal membrane involves RAB7A and SNX3. The SNX-BAR retromer mediates retrograde transport of cargo proteins from endosomes to the trans-Golgi network (TGN) and is involved in endosome-to-plasma membrane transport for cargo protein recycling. The SNX3-retromer mediates the retrograde endosome-to-TGN transport of WLS distinct from the SNX-BAR retromer pathway. The SNX27-retromer is believed to be involved in endosome-to-plasma membrane trafficking and recycling of a broad spectrum of cargo proteins. The CSC seems to act as recruitment hub for other proteins, such as the WASH complex and TBC1D5. Required for retrograde transport of lysosomal enzyme receptor IGF2R. Required to regulate transcytosis of the polymeric immunoglobulin receptor (pIgR-pIgA). Required for the endosomal localization of WASHC2A (indicative for the WASH complex). Required for the endosomal localization of TBC1D5. Mediates retromer cargo recognition of SORL1 and is involved in trafficking of SORL1 implicated in sorting and processing of APP. Involved in retromer-independent lysosomal sorting of F2R. Involved in recycling of ADRB2. Enhances the affinity of SNX27 for PDZ-binding motifs in cargo proteins. This Homo sapiens (Human) protein is Vacuolar protein sorting-associated protein 26A.